Reading from the N-terminus, the 476-residue chain is Protein transport protein Sec61 subunit alpha isoform A (476 aa).

Residues 2 to 33 are Cytoplasmic-facing; that stretch reads GIKFLEVIKPFCAVLPEIQKPERKIQFREKVL. The helical transmembrane segment at 34–53 threads the bilayer; it reads WTAITLFIFLVCCQIPLFGI. The Lumenal segment spans residues 54–76; it reads MSSDSADPFYWMRVILASNRGTL. Residues 77–96 form a helical membrane-spanning segment; sequence MELGISPIVTSGLIMQLLAG. The Cytoplasmic portion of the chain corresponds to 97–117; that stretch reads AKIIEVGDTPKDRALFNGAQK. The helical transmembrane segment at 118–138 threads the bilayer; it reads LFGMIITIGQSIVYVMTGMYG. Residues 139-144 lie on the Lumenal side of the membrane; sequence DPSEMG. A helical transmembrane segment spans residues 145 to 165; it reads AGICLLIIIQLFVAGLIVLLL. Over 166–172 the chain is Cytoplasmic; that stretch reads DELLQKG. The chain crosses the membrane as a helical span at residues 173 to 193; that stretch reads YGLGSGISLFIATNICETIVW. Over 194–240 the chain is Lumenal; it reads KAFSPTTVNTGRGTEFEGAIIALFHLLATRTDKVRALREAFYRQNLP. A helical transmembrane segment spans residues 241 to 261; the sequence is NLLNLIATVFVFAVVIYFQGF. The Cytoplasmic segment spans residues 262–288; it reads RVDLPIKSARYRGQYNTYPIKLFYTSN. The chain crosses the membrane as a helical span at residues 289-309; it reads IPIILQSALVSNLYVISQMLS. Topologically, residues 310 to 354 are lumenal; sequence TRFSGNFLVNLLGTWSDTSTGGPARAYPVGGLCYFLSPPESFGSV. A helical membrane pass occupies residues 355 to 375; the sequence is LDDPIHAAIYIVFMLGSCAFF. The Cytoplasmic segment spans residues 376 to 420; that stretch reads SKTWIEVSGSSAKDVAKQLKEQQMVMGGHRETSMVHELNRYIPTA. The chain crosses the membrane as a helical span at residues 421–441; that stretch reads AAFGGLCIGGLSVMADFLGAI. The Lumenal segment spans residues 442–445; it reads GSGT. The chain crosses the membrane as a helical span at residues 446-462; sequence GILLAVTIIYQYFEIFV. Over 463 to 476 the chain is Cytoplasmic; sequence KEQSEMGSMGALLF.

Belongs to the SecY/SEC61-alpha family. In terms of assembly, the SEC61 channel-forming translocon complex consists of channel-forming core components SEC61A1, SEC61B and SEC61G and different auxiliary components such as SEC62 and SEC63. The SEC61 channel associates with the multi-pass translocon (MPT) complex.

The protein resides in the endoplasmic reticulum membrane. Its function is as follows. Component of SEC61 channel-forming translocon complex that mediates transport of signal peptide-containing precursor polypeptides across the endoplasmic reticulum (ER). Forms a ribosome receptor and a gated pore in the ER membrane, both functions required for cotranslational translocation of nascent polypeptides. May cooperate with auxiliary protein SEC62, SEC63 and HSPA5/BiP to enable post-translational transport of small presecretory proteins. The SEC61 channel is also involved in ER membrane insertion of transmembrane proteins: it mediates membrane insertion of the first few transmembrane segments of proteins, while insertion of subsequent transmembrane regions of multi-pass membrane proteins is mediated by the multi-pass translocon (MPT) complex. This is Protein transport protein Sec61 subunit alpha isoform A (sec61aa) from Oncorhynchus mykiss (Rainbow trout).